Here is a 147-residue protein sequence, read N- to C-terminus: Hemoglobin subunit epsilon (147 aa).

The Globin domain maps to 3–147 (HFTAEEKATV…VANALAHKYH (145 aa)). Phosphoserine is present on residues serine 14 and serine 51. Histidine 64 and histidine 93 together coordinate heme b.

The protein belongs to the globin family. As to quaternary structure, heterotetramer of two alpha chains and two epsilon chains in early embryonic hemoglobin Gower-2; two zeta chains and two epsilon chains in early embryonic hemoglobin Gower-1. Red blood cells.

In terms of biological role, the epsilon chain is a beta-type chain of early mammalian embryonic hemoglobin. The sequence is that of Hemoglobin subunit epsilon (HBE1) from Bradypus tridactylus (Pale-throated three-toed sloth).